Reading from the N-terminus, the 224-residue chain is UPF0758 protein VCM66_0205 (224 aa).

Residues 1–20 (MSLKQLPTESMPREKLLQRG) are disordered. The MPN domain occupies 102 to 224 (ALTSPQQTKL…VVSFAERGWI (123 aa)). Residues His-173, His-175, and Asp-186 each coordinate Zn(2+). Positions 173–186 (HNHPSGVAEPSQAD) match the JAMM motif motif.

The protein belongs to the UPF0758 family.

This Vibrio cholerae serotype O1 (strain M66-2) protein is UPF0758 protein VCM66_0205.